A 951-amino-acid polypeptide reads, in one-letter code: Leucine-rich repeat-containing G-protein coupled receptor 4 (951 aa).

The signal sequence occupies residues 1–24 (MPGPLRLLCFFALGLLGSAGPSGA). The LRRNT domain maps to 25–57 (APPLCAAPCSCDGDRRVDCSGKGLTAVPEGLSA). The Extracellular segment spans residues 25 to 544 (APPLCAAPCS…LLGSWMIRLT (520 aa)). Intrachain disulfides connect Cys29/Cys35 and Cys33/Cys43. 15 LRR repeats span residues 58–79 (FTQA…AFKN), 82–103 (FLEE…ALSG), 106–127 (ELKV…AIRG), 130–151 (ALQS…SFEG), 154–177 (QLRH…SNLP), 178–199 (TLQA…AFTN), 202–223 (SLVV…CFDG), 226–247 (NLET…IKAL), 249–270 (SLKE…AFAG), 273–294 (LLRT…AFHN), 320–341 (HLES…LCQN), 344–365 (MLRT…NGCR), 366–387 (ALEE…TFQG), 390–411 (SLRI…AFAK), and 414–435 (TITN…GLNG). Residue Asn68 is glycosylated (N-linked (GlcNAc...) asparagine). Asn188 and Asn199 each carry an N-linked (GlcNAc...) asparagine glycan. Residue Asn294 is glycosylated (N-linked (GlcNAc...) asparagine). Cys339 and Cys364 are joined by a disulfide. 2 disulfide bridges follow: Cys470–Cys522 and Cys471–Cys476. The tract at residues 487-512 (NSPQDHSVTKEKGATDAANATSTAES) is disordered. The span at 501 to 510 (TDAANATSTA) shows a compositional bias: low complexity. Residue Asn505 is glycosylated (N-linked (GlcNAc...) asparagine). A helical membrane pass occupies residues 545–565 (VWFIFLVALLFNLLVILTVFA). Over 566 to 575 (SCSSLPASKL) the chain is Cytoplasmic. Residues 576 to 596 (FIGLISVSNLLMGIYTGILTF) form a helical membrane-spanning segment. The Extracellular segment spans residues 597–619 (LDAVSWGRFAEFGIWWETGSGCK). Cys618 and Cys693 are oxidised to a cystine. A helical membrane pass occupies residues 620–640 (VAGSLAVFSSESAVFLLTLAA). The Cytoplasmic portion of the chain corresponds to 641–661 (VERSVFAKDVMKNGKSSHLRQ). The helical transmembrane segment at 662 to 682 (FQVAALVALLGAAIAGCFPLF) threads the bilayer. Residues 683-703 (HGGQYSASPLCLPFPTGETPS) lie on the Extracellular side of the membrane. The helical transmembrane segment at 704–724 (LGFTVTLVLLNSLAFLLMAII) threads the bilayer. At 725 to 756 (YTKLYCNLEKEDPSENSQSSMIKHVAWLIFTN) the chain is on the cytoplasmic side. A helical membrane pass occupies residues 757-777 (CIFFCPVAFFSFAPLITAISI). The Extracellular segment spans residues 778-783 (SPEIMK). The chain crosses the membrane as a helical span at residues 784–804 (SVTLIFFPLPACLNPVLYVFF). Residues 805–951 (NPKFKDDWKL…YAYNLPRVRD (147 aa)) are Cytoplasmic-facing. Ser920 bears the Phosphoserine mark.

Belongs to the G-protein coupled receptor 1 family.

It is found in the cell membrane. Its function is as follows. Receptor for R-spondins that potentiates the canonical Wnt signaling pathway and is involved in the formation of various organs. Upon binding to R-spondins (RSPO1, RSPO2, RSPO3 or RSPO4), associates with phosphorylated LRP6 and frizzled receptors that are activated by extracellular Wnt receptors, triggering the canonical Wnt signaling pathway to increase expression of target genes. In contrast to classical G-protein coupled receptors, does not activate heterotrimeric G-proteins to transduce the signal. Its function as activator of the Wnt signaling pathway is required for the development of various organs, including liver, kidney, intestine, bone, reproductive tract and eye. May also act as a receptor for norrin (NDP), such results however require additional confirmation in vivo. Required during spermatogenesis to activate the Wnt signaling pathway in peritubular myoid cells. Required for the maintenance of intestinal stem cells and Paneth cell differentiation in postnatal intestinal crypts. Acts as a regulator of bone formation and remodeling. Involved in kidney development; required for maintaining the ureteric bud in an undifferentiated state. Involved in the development of the anterior segment of the eye. Required during erythropoiesis. Also acts as a negative regulator of innate immunity by inhibiting TLR2/TLR4 associated pattern-recognition and pro-inflammatory cytokine production. Plays an important role in regulating the circadian rhythms of plasma lipids, partially through regulating the rhythmic expression of MTTP. Required for proper development of GnRH neurons (gonadotropin-releasing hormone expressing neurons) that control the release of reproductive hormones from the pituitary gland. This chain is Leucine-rich repeat-containing G-protein coupled receptor 4 (Lgr4), found in Mus musculus (Mouse).